A 227-amino-acid chain; its full sequence is 2,3-bisphosphoglycerate-dependent phosphoglycerate mutase (227 aa).

Residues arginine 7–asparagine 14, threonine 20–glycine 21, arginine 59, glutamate 86–tyrosine 89, lysine 97, arginine 113–arginine 114, and glycine 182–asparagine 183 each bind substrate. Histidine 8 functions as the Tele-phosphohistidine intermediate in the catalytic mechanism. The Proton donor/acceptor role is filled by glutamate 86.

The protein belongs to the phosphoglycerate mutase family. BPG-dependent PGAM subfamily. As to quaternary structure, homodimer.

The catalysed reaction is (2R)-2-phosphoglycerate = (2R)-3-phosphoglycerate. It participates in carbohydrate degradation; glycolysis; pyruvate from D-glyceraldehyde 3-phosphate: step 3/5. Catalyzes the interconversion of 2-phosphoglycerate and 3-phosphoglycerate. The polypeptide is 2,3-bisphosphoglycerate-dependent phosphoglycerate mutase (Actinobacillus pleuropneumoniae serotype 5b (strain L20)).